Here is a 240-residue protein sequence, read N- to C-terminus: Rho GDP-dissociation inhibitor 1 (240 aa).

The segment at 1-66 (MSLVSGARDM…DDDSKLQLGP (66 aa)) is disordered.

Belongs to the Rho GDI family. As to quaternary structure, interacts with RAC-like GTP binding proteins ARAC5/ROP4 and ARAC3/ROP6.

The protein resides in the cytoplasm. Regulates the GDP/GTP exchange reaction of the Rho proteins by inhibiting the dissociation of GDP from them, and the subsequent binding of GTP to them. The sequence is that of Rho GDP-dissociation inhibitor 1 (GDI1) from Arabidopsis thaliana (Mouse-ear cress).